The chain runs to 516 residues: Putative Rieske 2Fe-2S iron-sulfur protein MT3926 (516 aa).

The 88-residue stretch at 429–516 (LYTFFKCLTD…RGHQLRSSRP (88 aa)) folds into the Rieske domain. Positions 469, 471, 489, and 492 each coordinate [2Fe-2S] cluster.

Requires [2Fe-2S] cluster as cofactor.

This is Putative Rieske 2Fe-2S iron-sulfur protein MT3926 from Mycobacterium tuberculosis (strain CDC 1551 / Oshkosh).